A 2032-amino-acid chain; its full sequence is Cytoskeleton-associated protein 5 (2032 aa).

TOG stretches follow at residues 1–223 (MGDD…KLPT), 268–502 (YELL…LVHG), and 588–817 (SIEV…GQSP). The residue at position 48 (K48) is an N6-acetyllysine. HEAT repeat units lie at residues 159-197 (IISL…WNRD), 356-394 (GQYA…TTTL), and 434-472 (KSLL…VVGE). Residues 501-579 (HGKKSGLATE…GTKNKKGLET (79 aa)) are disordered. The HEAT 4 repeat unit spans residues 750-788 (ELNVKAFISNVKTALAATNPAVRTSAITLLGVMYLYVGP). Residues 811–848 (KMQGQSPPAPTRGIAKHSTSATDEGEDGEEPGEGGNDV) are disordered. The residue at position 816 (S816) is a Phosphoserine. Positions 833-842 (DEGEDGEEPG) are enriched in acidic residues. TOG stretches follow at residues 853-1081 (PRIE…ANMP) and 1193-1428 (IEQL…KRPS). 3 HEAT repeats span residues 855-893 (IEIS…EAKF), 936-974 (RQHV…QTGM), and 1013-1051 (PTDL…HLGY). Positions 1078–1095 (ANMPSKPAAPAKAMSKPM) are enriched in low complexity. The disordered stretch occupies residues 1078 to 1156 (ANMPSKPAAP…KTTLKEDDDK (79 aa)). HEAT repeat units lie at residues 1284–1322 (ENEA…VYPA), 1324–1357 (KMFP…SYGM), and 1361–1399 (QPTP…VHGD). The segment at 1420–1459 (IKRSAKRPSAAPVKQAEEKPQRTQNINSNANMLRKGPAED) is disordered. Polar residues predominate over residues 1441 to 1450 (RTQNINSNAN). S1469 is modified (phosphoserine). The disordered stretch occupies residues 1801 to 1822 (SMDQTGSKSDKETEKGASRIDE). The span at 1808 to 1822 (KSDKETEKGASRIDE) shows a compositional bias: basic and acidic residues. The residue at position 1861 (S1861) is a Phosphoserine. Disordered regions lie at residues 1893-1926 (SKGR…GNTN) and 1948-2032 (LDNT…SSRK). Low complexity predominate over residues 1909–1921 (VTCVPTPTSTVSS). Residues 1932–1957 (PSVYLERLKILRQRCGLDNTKQDDRP) form an interaction with TACC3 region. Over residues 1972–1983 (ASSTDMLHSKLS) the composition is skewed to polar residues. Residues 1984-1997 (QLRESREQHQHSDL) show a composition bias toward basic and acidic residues. The segment covering 2002–2015 (THSAGTMTSSSSTT) has biased composition (low complexity). Positions 2018-2032 (DDLKKRLERIKSSRK) are enriched in basic and acidic residues.

This sequence belongs to the TOG/XMAP215 family. In terms of assembly, interacts with TACC1. Interacts with HNRNPA2B1. Interacts with TACC3 independently of clathrin. Interacts with TACC3 and clathrin forming the TACC3/ch-TOG/clathrin complex located at spindle inter-microtubules bridges. Interacts with NDC80; indicative for an association with the NDC80 complex. Interacts with SLAIN2. Interacts with SLAIN1.

The protein localises to the cytoplasm. The protein resides in the cytoskeleton. It is found in the microtubule organizing center. Its subcellular location is the centrosome. It localises to the spindle pole. The protein localises to the spindle. The protein resides in the chromosome. It is found in the centromere. Its subcellular location is the kinetochore. Binds to the plus end of microtubules and regulates microtubule dynamics and microtubule organization. Acts as a processive microtubule polymerase. Promotes cytoplasmic microtubule nucleation and elongation. Plays a major role in organizing spindle poles. In spindle formation protects kinetochore microtubules from depolymerization by KIF2C and has an essential role in centrosomal microtubule assembly independently of KIF2C activity. Contributes to centrosome integrity. Acts as a component of the TACC3/ch-TOG/clathrin complex proposed to contribute to stabilization of kinetochore fibers of the mitotic spindle by acting as inter-microtubule bridge. The TACC3/ch-TOG/clathrin complex is required for the maintenance of kinetochore fiber tension. Enhances the strength of NDC80 complex-mediated kinetochore-tip microtubule attachments. The sequence is that of Cytoskeleton-associated protein 5 from Mus musculus (Mouse).